Reading from the N-terminus, the 120-residue chain is Large ribosomal subunit protein uL18 (120 aa).

This sequence belongs to the universal ribosomal protein uL18 family. In terms of assembly, part of the 50S ribosomal subunit; part of the 5S rRNA/L5/L18/L25 subcomplex. Contacts the 5S and 23S rRNAs.

Its function is as follows. This is one of the proteins that bind and probably mediate the attachment of the 5S RNA into the large ribosomal subunit, where it forms part of the central protuberance. This Rhodopseudomonas palustris (strain HaA2) protein is Large ribosomal subunit protein uL18.